Consider the following 282-residue polypeptide: Pantothenate synthetase (282 aa).

30–37 (MGFLHDGH) provides a ligand contact to ATP. The active-site Proton donor is the His-37. Residue Gln-60 participates in (R)-pantoate binding. Gln-60 contacts beta-alanine. ATP is bound at residue 146–149 (GQKD). Gln-152 provides a ligand contact to (R)-pantoate. Residues Ile-175 and 183–186 (KSSR) contribute to the ATP site.

The protein belongs to the pantothenate synthetase family. In terms of assembly, homodimer.

It localises to the cytoplasm. The enzyme catalyses (R)-pantoate + beta-alanine + ATP = (R)-pantothenate + AMP + diphosphate + H(+). It participates in cofactor biosynthesis; (R)-pantothenate biosynthesis; (R)-pantothenate from (R)-pantoate and beta-alanine: step 1/1. Catalyzes the condensation of pantoate with beta-alanine in an ATP-dependent reaction via a pantoyl-adenylate intermediate. The protein is Pantothenate synthetase of Campylobacter jejuni (strain RM1221).